Consider the following 400-residue polypeptide: GTPase Obg (400 aa).

One can recognise an Obg domain in the interval 1–159 (MRFVDEAVIT…REIRLELKVL (159 aa)). One can recognise an OBG-type G domain in the interval 160–333 (ADVGLLGMPN…VVYYLMDQIE (174 aa)). GTP contacts are provided by residues 166 to 173 (GMPNAGKS), 191 to 195 (FTTMV), 213 to 216 (DIPG), 283 to 286 (NKLD), and 314 to 316 (SGL). Ser-173 and Thr-193 together coordinate Mg(2+).

The protein belongs to the TRAFAC class OBG-HflX-like GTPase superfamily. OBG GTPase family. Monomer. Mg(2+) serves as cofactor.

The protein resides in the cytoplasm. Functionally, an essential GTPase which binds GTP, GDP and possibly (p)ppGpp with moderate affinity, with high nucleotide exchange rates and a fairly low GTP hydrolysis rate. Plays a role in control of the cell cycle, stress response, ribosome biogenesis and in those bacteria that undergo differentiation, in morphogenesis control. The protein is GTPase Obg of Acinetobacter baylyi (strain ATCC 33305 / BD413 / ADP1).